The primary structure comprises 301 residues: Pyridoxal 5'-phosphate synthase subunit Pdx1 (301 aa).

Asp26 provides a ligand contact to D-ribose 5-phosphate. Lys83 serves as the catalytic Schiff-base intermediate with D-ribose 5-phosphate. Gly155 serves as a coordination point for D-ribose 5-phosphate. Residue Arg167 participates in D-glyceraldehyde 3-phosphate binding. Residues Gly216 and 237–238 (GS) contribute to the D-ribose 5-phosphate site.

This sequence belongs to the PdxS/SNZ family. As to quaternary structure, homohexamer and homododecamer. In the presence of Pdx2, forms a dodecamer of heterodimers.

Its subcellular location is the cytoplasm. It catalyses the reaction aldehydo-D-ribose 5-phosphate + D-glyceraldehyde 3-phosphate + L-glutamine = pyridoxal 5'-phosphate + L-glutamate + phosphate + 3 H2O + H(+). It functions in the pathway cofactor biosynthesis; pyridoxal 5'-phosphate biosynthesis. Functionally, catalyzes the formation of pyridoxal 5'-phosphate from ribose 5-phosphate (RBP), glyceraldehyde 3-phosphate (G3P) and ammonia. The ammonia is provided by Pdx2. Can also use ribulose 5-phosphate and dihydroxyacetone phosphate as substrates, resulting from enzyme-catalyzed isomerization of RBP and G3P, respectively. The protein is Pyridoxal 5'-phosphate synthase subunit Pdx1 (pdx1) of Plasmodium falciparum (isolate 3D7).